A 275-amino-acid polypeptide reads, in one-letter code: Non-heme chloroperoxidase CPO-A1 (275 aa).

An AB hydrolase-1 domain is found at 22 to 255 (PVVFIHGWPL…KVYEGSSHGI (234 aa)). Catalysis depends on charge relay system residues S95, D224, and H253.

The protein belongs to the AB hydrolase superfamily. Bacterial non-heme haloperoxidase / perhydrolase family. As to quaternary structure, homodimer.

With respect to regulation, brominating activity not inhibited by azide, peroxidase activity stimulated by bromide. Its function is as follows. May be a chlorinating enzyme involved in 7-chlorotetracycline biosynthesis. Able to brominate as well. This is Non-heme chloroperoxidase CPO-A1 (bpoA1) from Kitasatospora aureofaciens (Streptomyces aureofaciens).